Here is a 361-residue protein sequence, read N- to C-terminus: Glutaminyl-peptide cyclotransferase (361 aa).

The first 28 residues, 1 to 28 (MAGCRDPRVVDTLHLLLLVAVLPLAVSG), serve as a signal peptide directing secretion. Asn-49 is a glycosylation site (N-linked (GlcNAc...) asparagine). Cys-139 and Cys-164 are joined by a disulfide. Position 159 (Asp-159) interacts with Zn(2+). N-linked (GlcNAc...) asparagine glycosylation occurs at Asn-183. Residue Glu-201 is the Proton acceptor of the active site. Glu-202 contacts Zn(2+). Asp-248 functions as the Proton acceptor in the catalytic mechanism. His-330 contributes to the Zn(2+) binding site.

Belongs to the glutaminyl-peptide cyclotransferase family. As to expression, expressed mainly in brain tissue.

The protein resides in the secreted. The catalysed reaction is N-terminal L-glutaminyl-[peptide] = N-terminal 5-oxo-L-prolyl-[peptide] + NH4(+). Functionally, responsible for the biosynthesis of pyroglutamyl peptides. Has a bias against acidic and tryptophan residues adjacent to the N-terminal glutaminyl residue and a lack of importance of chain length after the second residue. Also catalyzes N-terminal pyroglutamate formation. The polypeptide is Glutaminyl-peptide cyclotransferase (QPCT) (Bos taurus (Bovine)).